A 440-amino-acid chain; its full sequence is MEPSFIQSAMALGLPSKKASSRNIAVERKNLLTVCRFSVKTLLEKYTAEPIDDSSEEFVNFAAILEHILSHRFKGHVSWFSTDGQRGFWDYIRIACSKVTNNCISSIENMENISSARAKGRAWIRLALMEKRLSEYIVTALRDTRTTRRFYDDGAILLREESSVLTGMLIGLSAIDFSFCLKGEGIDGKTPAVIDYTPYLKFTQSYDYLSEEDDRESVGGSSSEDSSPEHPYLPLLTDEESWYSKWRKMEQKFRIVYAQKGYLEELVRLRETQLKNLEAENKRLTQRISEQAEQSLQEKHQLEGVILELQEQLTGLLPSETAPIKQFTPSLGAPLVNQWPSLSTLNDNEAPVNPSLYRRHSFLSTEHLSAELSLSSESQRLDGKQDGEPWGPIGKDPTPSMLGLCGSLASIPSCKSLPSLKSNECLVSNSSETSPTGSPS.

Residues 52 to 184 (DDSSEEFVNF…IDFSFCLKGE (133 aa)) form the RUN domain. Positions 213 to 233 (DDRESVGGSSSEDSSPEHPYL) are disordered. Residues 262–317 (YLEELVRLRETQLKNLEAENKRLTQRISEQAEQSLQEKHQLEGVILELQEQLTGLL) adopt a coiled-coil conformation. Residues 374-402 (LSSESQRLDGKQDGEPWGPIGKDPTPSML) are disordered.

This sequence belongs to the RUNDC3 family.

The sequence is that of RUN domain-containing protein 3A (rundc3a) from Xenopus tropicalis (Western clawed frog).